Here is a 290-residue protein sequence, read N- to C-terminus: 4-hydroxy-tetrahydrodipicolinate synthase (290 aa).

Threonine 44 contacts pyruvate. Tyrosine 132 functions as the Proton donor/acceptor in the catalytic mechanism. Lysine 160 (schiff-base intermediate with substrate) is an active-site residue. Isoleucine 202 serves as a coordination point for pyruvate.

It belongs to the DapA family. Homotetramer; dimer of dimers.

It localises to the cytoplasm. It catalyses the reaction L-aspartate 4-semialdehyde + pyruvate = (2S,4S)-4-hydroxy-2,3,4,5-tetrahydrodipicolinate + H2O + H(+). It functions in the pathway amino-acid biosynthesis; L-lysine biosynthesis via DAP pathway; (S)-tetrahydrodipicolinate from L-aspartate: step 3/4. Catalyzes the condensation of (S)-aspartate-beta-semialdehyde [(S)-ASA] and pyruvate to 4-hydroxy-tetrahydrodipicolinate (HTPA). The polypeptide is 4-hydroxy-tetrahydrodipicolinate synthase (Geobacter sp. (strain M21)).